The primary structure comprises 964 residues: Iron-responsive element-binding protein 2 (964 aa).

Positions 513, 579, and 582 each coordinate [4Fe-4S] cluster.

This sequence belongs to the aconitase/IPM isomerase family. In terms of assembly, interacts with RBCK1 only in iron-rich conditions. Interacts (when associated with the 4Fe-4S) with FBXL5. Interacts with CIAO1 and CIAO2A. [4Fe-4S] cluster serves as cofactor. Ubiquitinated and degraded by the proteasome in presence of high level of iron and oxygen. Ubiquitinated by a SCF complex containing FBXL5. Upon iron and oxygen depletion FBXL5 is degraded, preventing ubiquitination and allowing its RNA-binding activity.

The protein localises to the cytoplasm. In terms of biological role, RNA-binding protein that binds to iron-responsive elements (IRES), which are stem-loop structures found in the 5'-UTR of ferritin, and delta aminolevulinic acid synthase mRNAs, and in the 3'-UTR of transferrin receptor mRNA. Binding to the IRE element in ferritin results in the repression of its mRNA translation. Binding of the protein to the transferrin receptor mRNA inhibits the degradation of this otherwise rapidly degraded mRNA. The polypeptide is Iron-responsive element-binding protein 2 (IREB2) (Sus scrofa (Pig)).